Reading from the N-terminus, the 296-residue chain is Lipoyl synthase (296 aa).

Positions 37, 42, 48, 63, 67, 70, and 276 each coordinate [4Fe-4S] cluster. The 217-residue stretch at 49–265 (WSKKHTTVMI…ERVAKTKGFL (217 aa)) folds into the Radical SAM core domain.

The protein belongs to the radical SAM superfamily. Lipoyl synthase family. Requires [4Fe-4S] cluster as cofactor.

Its subcellular location is the cytoplasm. It catalyses the reaction [[Fe-S] cluster scaffold protein carrying a second [4Fe-4S](2+) cluster] + N(6)-octanoyl-L-lysyl-[protein] + 2 oxidized [2Fe-2S]-[ferredoxin] + 2 S-adenosyl-L-methionine + 4 H(+) = [[Fe-S] cluster scaffold protein] + N(6)-[(R)-dihydrolipoyl]-L-lysyl-[protein] + 4 Fe(3+) + 2 hydrogen sulfide + 2 5'-deoxyadenosine + 2 L-methionine + 2 reduced [2Fe-2S]-[ferredoxin]. The protein operates within protein modification; protein lipoylation via endogenous pathway; protein N(6)-(lipoyl)lysine from octanoyl-[acyl-carrier-protein]: step 2/2. Functionally, catalyzes the radical-mediated insertion of two sulfur atoms into the C-6 and C-8 positions of the octanoyl moiety bound to the lipoyl domains of lipoate-dependent enzymes, thereby converting the octanoylated domains into lipoylated derivatives. The chain is Lipoyl synthase from Rickettsia conorii (strain ATCC VR-613 / Malish 7).